A 432-amino-acid polypeptide reads, in one-letter code: Adenylosuccinate synthetase (432 aa).

GTP contacts are provided by residues 13–19 (GDEGKGK) and 41–43 (GHT). The active-site Proton acceptor is D14. Positions 14 and 41 each coordinate Mg(2+). Residues 14 to 17 (DEGK), 39 to 42 (NAGH), T130, R144, Q225, T240, and R304 contribute to the IMP site. The active-site Proton donor is the H42. Position 300–306 (300–306 (ATTGRPR)) interacts with substrate. GTP-binding positions include R306, 332–334 (KLD), and 415–417 (STG).

It belongs to the adenylosuccinate synthetase family. As to quaternary structure, homodimer. Mg(2+) serves as cofactor.

It localises to the cytoplasm. The catalysed reaction is IMP + L-aspartate + GTP = N(6)-(1,2-dicarboxyethyl)-AMP + GDP + phosphate + 2 H(+). The protein operates within purine metabolism; AMP biosynthesis via de novo pathway; AMP from IMP: step 1/2. In terms of biological role, plays an important role in the de novo pathway of purine nucleotide biosynthesis. Catalyzes the first committed step in the biosynthesis of AMP from IMP. This is Adenylosuccinate synthetase from Hahella chejuensis (strain KCTC 2396).